Reading from the N-terminus, the 1307-residue chain is Cellulose synthase 2 operon protein C (1307 aa).

The N-terminal stretch at 1-55 (MTRPRGPAPRDGAAWRRDPARRVLLRDAVRGREGGLRLACAVMAGLIVSGGVACA) is a signal peptide. TPR repeat units follow at residues 97-130 (LELL…EPDN), 270-303 (LDGL…EPIT), 339-372 (AAND…DPHD), 374-406 (DALG…GPDA), 458-491 (LTVL…APRD), 493-525 (GALF…APAM), 528-561 (RLEA…DPDD), 754-787 (IGLA…HPDS), and 788-821 (VEAH…KPAN).

It belongs to the AcsC/BcsC family.

Its subcellular location is the cell outer membrane. It functions in the pathway glycan metabolism; bacterial cellulose biosynthesis. In terms of biological role, required for maximal bacterial cellulose synthesis. This chain is Cellulose synthase 2 operon protein C (bcsCII), found in Komagataeibacter xylinus (Gluconacetobacter xylinus).